The following is a 293-amino-acid chain: Phosphoribosylaminoimidazole-succinocarboxamide synthase (293 aa).

This sequence belongs to the SAICAR synthetase family.

It catalyses the reaction 5-amino-1-(5-phospho-D-ribosyl)imidazole-4-carboxylate + L-aspartate + ATP = (2S)-2-[5-amino-1-(5-phospho-beta-D-ribosyl)imidazole-4-carboxamido]succinate + ADP + phosphate + 2 H(+). It functions in the pathway purine metabolism; IMP biosynthesis via de novo pathway; 5-amino-1-(5-phospho-D-ribosyl)imidazole-4-carboxamide from 5-amino-1-(5-phospho-D-ribosyl)imidazole-4-carboxylate: step 1/2. This chain is Phosphoribosylaminoimidazole-succinocarboxamide synthase, found in Bordetella petrii (strain ATCC BAA-461 / DSM 12804 / CCUG 43448).